Here is a 743-residue protein sequence, read N- to C-terminus: 1,4-alpha-glucan branching enzyme GlgB (743 aa).

D416 functions as the Nucleophile in the catalytic mechanism. Residue E469 is the Proton donor of the active site.

It belongs to the glycosyl hydrolase 13 family. GlgB subfamily. Monomer.

The enzyme catalyses Transfers a segment of a (1-&gt;4)-alpha-D-glucan chain to a primary hydroxy group in a similar glucan chain.. It participates in glycan biosynthesis; glycogen biosynthesis. In terms of biological role, catalyzes the formation of the alpha-1,6-glucosidic linkages in glycogen by scission of a 1,4-alpha-linked oligosaccharide from growing alpha-1,4-glucan chains and the subsequent attachment of the oligosaccharide to the alpha-1,6 position. The polypeptide is 1,4-alpha-glucan branching enzyme GlgB (Shewanella baltica (strain OS185)).